Reading from the N-terminus, the 40-residue chain is Photosystem II reaction center protein Y (40 aa).

The helical transmembrane segment at 5–23 (LIVVLAPILLAGGWAVFNI) threads the bilayer.

It belongs to the PsbY family. PSII is composed of 1 copy each of membrane proteins PsbA, PsbB, PsbC, PsbD, PsbE, PsbF, PsbH, PsbI, PsbJ, PsbK, PsbL, PsbM, PsbT, PsbX, PsbY, PsbZ, Psb30/Ycf12, peripheral proteins PsbO, CyanoQ (PsbQ), PsbU, PsbV and a large number of cofactors. It forms dimeric complexes.

Its subcellular location is the cellular thylakoid membrane. Functionally, loosely associated component of the core of photosystem II (PSII), it is not always seen in crystals. PSII is a light-driven water plastoquinone oxidoreductase, using light energy to abstract electrons from H(2)O, generating a proton gradient subsequently used for ATP formation. The chain is Photosystem II reaction center protein Y from Synechococcus elongatus (strain ATCC 33912 / PCC 7942 / FACHB-805) (Anacystis nidulans R2).